The chain runs to 201 residues: Peptidyl-tRNA hydrolase (201 aa).

Y14 is a binding site for tRNA. H19 (proton acceptor) is an active-site residue. 3 residues coordinate tRNA: Y64, N66, and N113. Residues 178-201 are disordered; that stretch reads PGPAMNRFNRKPEPPESGGEVAAK.

The protein belongs to the PTH family. As to quaternary structure, monomer.

The protein localises to the cytoplasm. It catalyses the reaction an N-acyl-L-alpha-aminoacyl-tRNA + H2O = an N-acyl-L-amino acid + a tRNA + H(+). In terms of biological role, hydrolyzes ribosome-free peptidyl-tRNAs (with 1 or more amino acids incorporated), which drop off the ribosome during protein synthesis, or as a result of ribosome stalling. Functionally, catalyzes the release of premature peptidyl moieties from peptidyl-tRNA molecules trapped in stalled 50S ribosomal subunits, and thus maintains levels of free tRNAs and 50S ribosomes. In Koribacter versatilis (strain Ellin345), this protein is Peptidyl-tRNA hydrolase.